The following is a 311-amino-acid chain: Protein N-terminal asparagine amidohydrolase (311 aa).

As to quaternary structure, monomer.

It is found in the cytoplasm. The enzyme catalyses N-terminal L-asparaginyl-[protein] + H2O + H(+) = N-terminal L-aspartyl-[protein] + NH4(+). N-terminal asparagine deamidase that mediates deamidation of N-terminal asparagine residues to aspartate. Required for the ubiquitin-dependent turnover of intracellular proteins that initiate with Met-Asn. These proteins are acetylated on the retained initiator methionine and can subsequently be modified by the removal of N-acetyl methionine by acylaminoacid hydrolase (AAH). Conversion of the resulting N-terminal asparagine to aspartate by NTAN1/PNAD renders the protein susceptible to arginylation, polyubiquitination and degradation as specified by the N-end rule. This enzyme does not act on substrates with internal or C-terminal asparagines and does not act on glutamine residues in any position. The protein is Protein N-terminal asparagine amidohydrolase (NTAN1) of Sus scrofa (Pig).